A 686-amino-acid polypeptide reads, in one-letter code: Forkhead box protein P1 (686 aa).

2 stretches are compositionally biased toward polar residues: residues 1-19 (MMQE…IQNG) and 279-292 (IINP…QLSV). 2 disordered regions span residues 1–23 (MMQE…ASGG) and 279–306 (IINP…EEHS). Positions 295–306 (PKRESLSHEEHS) are enriched in basic and acidic residues. The C2H2-type zinc-finger motif lies at 315-340 (GVCKWPGCEAVCEDFQSFLKHLNSEH). Residues 357–378 (VQQLELQLAKDKERLQAMMTHL) are leucine-zipper. Residues 391–395 (PLNLV) form a CTBP1-binding region. Polar residues predominate over residues 403–412 (TASEASPQSL). Residues 403–440 (TASEASPQSLPHTPTTPTAPITPVTQGPSVITTTSMHN) are disordered. Residues 413–427 (PHTPTTPTAPITPVT) are compositionally biased toward low complexity. The segment covering 428 to 439 (QGPSVITTTSMH) has biased composition (polar residues). The segment at residues 474–564 (RPPFTYASLI…PQKISGNPSL (91 aa)) is a DNA-binding region (fork-head). Positions 619 to 686 (MEHTNSNGSD…EDEPVNEDIE (68 aa)) are disordered. Positions 621–632 (HTNSNGSDSSPG) are enriched in polar residues. The span at 676 to 686 (YEDEPVNEDIE) shows a compositional bias: acidic residues.

The protein resides in the nucleus. Functionally, transcriptional repressor. The protein is Forkhead box protein P1 (FOXP1) of Gallus gallus (Chicken).